The following is a 496-amino-acid chain: Ribose import ATP-binding protein RbsA (496 aa).

ABC transporter domains are found at residues 3-239 (IVME…VGRE) and 246-493 (ERTP…TGGN). 35–42 (GENGAGKS) provides a ligand contact to ATP.

This sequence belongs to the ABC transporter superfamily. Ribose importer (TC 3.A.1.2.1) family. In terms of assembly, the complex is composed of an ATP-binding protein (RbsA), two transmembrane proteins (RbsC) and a solute-binding protein (RbsB).

The protein resides in the cell membrane. It carries out the reaction D-ribose(out) + ATP + H2O = D-ribose(in) + ADP + phosphate + H(+). In terms of biological role, part of the ABC transporter complex RbsABC involved in ribose import. Responsible for energy coupling to the transport system. In Oceanobacillus iheyensis (strain DSM 14371 / CIP 107618 / JCM 11309 / KCTC 3954 / HTE831), this protein is Ribose import ATP-binding protein RbsA.